The sequence spans 549 residues: DDB1- and CUL4-associated factor 11 (549 aa).

Positions 1 to 24 (MGSRNSSSAGSGSLEPSEGLSRRG) are enriched in low complexity. Residues 1–40 (MGSRNSSSAGSGSLEPSEGLSRRGAGLRRSEEEEEEDEDV) are disordered. A phosphoserine mark is found at serine 73 and serine 75. The span at 80 to 89 (DSAWDGRLGD) shows a compositional bias: basic and acidic residues. The interval 80–100 (DSAWDGRLGDRYNPPVDATPD) is disordered. WD repeat units follow at residues 170 to 210 (TYSQ…HKFK), 216 to 258 (DVGW…TALD), 263 to 302 (ERRF…RTLQ), 305 to 345 (SHED…EDDP), 353 to 392 (GHQD…SREG), 435 to 480 (GVLH…KKLT), and 481 to 520 (NHKA…YFQD).

In terms of assembly, interacts with DDB1 and CUL4A.

The protein operates within protein modification; protein ubiquitination. Functionally, may function as a substrate receptor for CUL4-DDB1 E3 ubiquitin-protein ligase complex. In Rattus norvegicus (Rat), this protein is DDB1- and CUL4-associated factor 11 (Dcaf11).